A 274-amino-acid chain; its full sequence is Serine protease 28 (274 aa).

A signal peptide spans 1-26 (MFRLLLLALSCLESTVFMASVSISRS). The Peptidase S1 domain maps to 31-274 (IVGGQRTPPG…SLAWIHQHIQ (244 aa)). A disulfide bridge links Cys62 with Cys78. The active-site Charge relay system is the His77. Asn106 carries N-linked (GlcNAc...) asparagine glycosylation. Asp124 (charge relay system) is an active-site residue. 3 disulfide bridges follow: Cys158-Cys233, Cys191-Cys214, and Cys223-Cys251. The Charge relay system role is filled by Ser227.

This sequence belongs to the peptidase S1 family. Homooligomer, heterodimer and heterotetramer. Able to form homo- and hetero- tetrameric structures. Heterotetramer is far more stable than the homotetramer. As to expression, expressed in embryos throughout the preimplantation period, during blastocyst hatching and embryo outgrowth. Found in uterus especially in glandular epithelium.

The protein resides in the secreted. Inhibited by benzamidine, (4-amidino-phenyl)-methane-sulfonyl (APMSF), N-p-tosyl-L-lysine chloromethylketone (TLCK), gabexate, mesylate, BABIM and trypsin soybean inhibitor (TSI). Functionally, involved in embryo hatching and implantation. The chain is Serine protease 28 (Prss28) from Mus musculus (Mouse).